Here is a 167-residue protein sequence, read N- to C-terminus: Leptin (167 aa).

The N-terminal stretch at 1–21 (MRCGPLCRFLWLWPYLSCVEA) is a signal peptide. A disulfide bond links Cys117 and Cys167.

It belongs to the leptin family.

Its subcellular location is the secreted. Its function is as follows. Key player in the regulation of energy balance and body weight control. Once released into the circulation, has central and peripheral effects by binding LEPR, found in many tissues, which results in the activation of several major signaling pathways. In the hypothalamus, acts as an appetite-regulating factor that induces a decrease in food intake and an increase in energy consumption by inducing anorexinogenic factors and suppressing orexigenic neuropeptides, also regulates bone mass and secretion of hypothalamo-pituitary-adrenal hormones. In the periphery, increases basal metabolism, influences reproductive function, regulates pancreatic beta-cell function and insulin secretion, is pro-angiogenic for endothelial cell and affects innate and adaptive immunity. In the arcuate nucleus of the hypothalamus, activates by depolarization POMC neurons inducing FOS and SOCS3 expression to release anorexigenic peptides and inhibits by hyperpolarization NPY neurons inducing SOCS3 with a consequent reduction on release of orexigenic peptides. In addition to its known satiety inducing effect, has a modulatory role in nutrient absorption. In the intestine, reduces glucose absorption by enterocytes by activating PKC and leading to a sequential activation of p38, PI3K and ERK signaling pathways which exerts an inhibitory effect on glucose absorption. Acts as a growth factor on certain tissues, through the activation of different signaling pathways increases expression of genes involved in cell cycle regulation such as CCND1, via JAK2-STAT3 pathway, or VEGFA, via MAPK1/3 and PI3K-AKT1 pathways. May also play an apoptotic role via JAK2-STAT3 pathway and up-regulation of BIRC5 expression. Pro-angiogenic, has mitogenic activity on vascular endothelial cells and plays a role in matrix remodeling by regulating the expression of matrix metalloproteinases (MMPs) and tissue inhibitors of metalloproteinases (TIMPs). In innate immunity, modulates the activity and function of neutrophils by increasing chemotaxis and the secretion of oxygen radicals. Increases phagocytosis by macrophages and enhances secretion of pro-inflammatory mediators. Increases cytotoxic ability of NK cells. Plays a pro-inflammatory role, in synergy with IL1B, by inducing NOS2 which promotes the production of IL6, IL8 and Prostaglandin E2, through a signaling pathway that involves JAK2, PI3K, MAP2K1/MEK1 and MAPK14/p38. In adaptive immunity, promotes the switch of memory T-cells towards T helper-1 cell immune responses. Increases CD4(+)CD25(-) T-cell proliferation and reduces autophagy during TCR (T-cell receptor) stimulation, through MTOR signaling pathway activation and BCL2 up-regulation. The protein is Leptin (LEP) of Canis lupus familiaris (Dog).